A 156-amino-acid chain; its full sequence is Ribosomal RNA large subunit methyltransferase H (156 aa).

Residues L73, G104, and 123–128 (LSALTL) each bind S-adenosyl-L-methionine.

This sequence belongs to the RNA methyltransferase RlmH family. In terms of assembly, homodimer.

Its subcellular location is the cytoplasm. It catalyses the reaction pseudouridine(1915) in 23S rRNA + S-adenosyl-L-methionine = N(3)-methylpseudouridine(1915) in 23S rRNA + S-adenosyl-L-homocysteine + H(+). Specifically methylates the pseudouridine at position 1915 (m3Psi1915) in 23S rRNA. The protein is Ribosomal RNA large subunit methyltransferase H of Shewanella putrefaciens (strain CN-32 / ATCC BAA-453).